The following is a 462-amino-acid chain: Zinc finger CCCH domain-containing protein 34 (462 aa).

Over residues 1–13 (MERYGRPGEEGSR) the composition is skewed to basic and acidic residues. The disordered stretch occupies residues 1-26 (MERYGRPGEEGSRSDPSLEWTSHGGE). 3 C3H1-type zinc fingers span residues 54 to 82 (RPDE…HPRD), 100 to 128 (RMGH…HPRQ), and 148 to 176 (RPGE…HPVP). Residues 288–303 (TGTYQSVPSSNSTSKE) show a composition bias toward polar residues. Positions 288 to 310 (TGTYQSVPSSNSTSKEFPQRPDQ) are disordered. 2 consecutive C3H1-type zinc fingers follow at residues 307–335 (RPDQ…HPVD) and 353–381 (RPGV…HSMS). Residues 405–418 (SSSLSGSSAPVSSS) show a composition bias toward low complexity. Residues 405–462 (SSSLSGSSAPVSSSNEPTKEAVTPAVSSMVSGLSRPEPAETSGDSASVSGSIEAKTSS) are disordered. Residues 446-462 (SGDSASVSGSIEAKTSS) show a composition bias toward polar residues.

It is found in the nucleus. This is Zinc finger CCCH domain-containing protein 34 from Arabidopsis thaliana (Mouse-ear cress).